The chain runs to 148 residues: Tetratricopeptide repeat protein 32 (148 aa).

3 TPR repeats span residues 12–45 (SSAA…CARH), 55–88 (ATAY…LPSF), and 89–122 (EVPY…NPGF).

The polypeptide is Tetratricopeptide repeat protein 32 (Ttc32) (Mus musculus (Mouse)).